Reading from the N-terminus, the 284-residue chain is Bifunctional protein FolD (284 aa).

NADP(+)-binding positions include 166 to 168 (GAS) and Ile-232.

Belongs to the tetrahydrofolate dehydrogenase/cyclohydrolase family. As to quaternary structure, homodimer.

It carries out the reaction (6R)-5,10-methylene-5,6,7,8-tetrahydrofolate + NADP(+) = (6R)-5,10-methenyltetrahydrofolate + NADPH. It catalyses the reaction (6R)-5,10-methenyltetrahydrofolate + H2O = (6R)-10-formyltetrahydrofolate + H(+). It functions in the pathway one-carbon metabolism; tetrahydrofolate interconversion. Its function is as follows. Catalyzes the oxidation of 5,10-methylenetetrahydrofolate to 5,10-methenyltetrahydrofolate and then the hydrolysis of 5,10-methenyltetrahydrofolate to 10-formyltetrahydrofolate. The chain is Bifunctional protein FolD from Pseudomonas fluorescens (strain ATCC BAA-477 / NRRL B-23932 / Pf-5).